Consider the following 599-residue polypeptide: NADH-ubiquinone oxidoreductase chain 5 (599 aa).

The next 17 helical transmembrane spans lie at 1–21, 41–61, 79–99, 114–134, 137–157, 166–186, 198–218, 237–257, 269–289, 297–317, 323–343, 362–382, 400–420, 453–473, 478–498, 509–529, and 578–598; these read MALM…PLVF, FITS…IIIL, LDLY…SIME, FLNY…ANNM, LFIG…WWYG, LQAI…MAWF, IFSL…AAMG, TPVS…FLLI, IMTT…ICAL, IIAF…GINQ, LHIC…GSII, MPLT…TPFM, INSW…AYST, LMLG…PVNM, MPFT…IVAM, MYPN…PTII, and GMLK…MLIM.

This sequence belongs to the complex I subunit 5 family.

It localises to the mitochondrion inner membrane. It catalyses the reaction a ubiquinone + NADH + 5 H(+)(in) = a ubiquinol + NAD(+) + 4 H(+)(out). Functionally, core subunit of the mitochondrial membrane respiratory chain NADH dehydrogenase (Complex I) that is believed to belong to the minimal assembly required for catalysis. Complex I functions in the transfer of electrons from NADH to the respiratory chain. The immediate electron acceptor for the enzyme is believed to be ubiquinone. This is NADH-ubiquinone oxidoreductase chain 5 (ND5) from Geomys personatus (Texas pocket gopher).